A 739-amino-acid chain; its full sequence is Phosphoribosylformylglycinamidine synthase subunit PurL (739 aa).

Histidine 52 is a catalytic residue. Tyrosine 55 and lysine 94 together coordinate ATP. Residue glutamate 96 participates in Mg(2+) binding. Residues 97–100 and arginine 119 contribute to the substrate site; that span reads SHNH. The Proton acceptor role is filled by histidine 98. Aspartate 120 contributes to the Mg(2+) binding site. Substrate is bound at residue glutamine 243. Aspartate 271 is a Mg(2+) binding site. 315–317 serves as a coordination point for substrate; the sequence is ESQ. 2 residues coordinate ATP: aspartate 498 and glycine 535. Residue asparagine 536 participates in Mg(2+) binding. Substrate is bound at residue serine 538.

It belongs to the FGAMS family. Monomer. Part of the FGAM synthase complex composed of 1 PurL, 1 PurQ and 2 PurS subunits.

It localises to the cytoplasm. It catalyses the reaction N(2)-formyl-N(1)-(5-phospho-beta-D-ribosyl)glycinamide + L-glutamine + ATP + H2O = 2-formamido-N(1)-(5-O-phospho-beta-D-ribosyl)acetamidine + L-glutamate + ADP + phosphate + H(+). It functions in the pathway purine metabolism; IMP biosynthesis via de novo pathway; 5-amino-1-(5-phospho-D-ribosyl)imidazole from N(2)-formyl-N(1)-(5-phospho-D-ribosyl)glycinamide: step 1/2. Its function is as follows. Part of the phosphoribosylformylglycinamidine synthase complex involved in the purines biosynthetic pathway. Catalyzes the ATP-dependent conversion of formylglycinamide ribonucleotide (FGAR) and glutamine to yield formylglycinamidine ribonucleotide (FGAM) and glutamate. The FGAM synthase complex is composed of three subunits. PurQ produces an ammonia molecule by converting glutamine to glutamate. PurL transfers the ammonia molecule to FGAR to form FGAM in an ATP-dependent manner. PurS interacts with PurQ and PurL and is thought to assist in the transfer of the ammonia molecule from PurQ to PurL. The sequence is that of Phosphoribosylformylglycinamidine synthase subunit PurL from Caulobacter vibrioides (strain ATCC 19089 / CIP 103742 / CB 15) (Caulobacter crescentus).